Consider the following 60-residue polypeptide: Large ribosomal subunit protein bL32 (60 aa).

It belongs to the bacterial ribosomal protein bL32 family.

The polypeptide is Large ribosomal subunit protein bL32 (Clostridium perfringens (strain ATCC 13124 / DSM 756 / JCM 1290 / NCIMB 6125 / NCTC 8237 / Type A)).